Reading from the N-terminus, the 565-residue chain is NAD-dependent malic enzyme (565 aa).

Y104 (proton donor) is an active-site residue. Residue R157 participates in NAD(+) binding. K175 acts as the Proton acceptor in catalysis. The a divalent metal cation site is built by E246, D247, and D270. D270 and N418 together coordinate NAD(+).

The protein belongs to the malic enzymes family. Homotetramer. Mg(2+) serves as cofactor. It depends on Mn(2+) as a cofactor.

It catalyses the reaction (S)-malate + NAD(+) = pyruvate + CO2 + NADH. It carries out the reaction oxaloacetate + H(+) = pyruvate + CO2. The chain is NAD-dependent malic enzyme from Pectobacterium carotovorum subsp. carotovorum (strain PC1).